A 424-amino-acid chain; its full sequence is Tyrosine--tRNA ligase 1 (424 aa).

Tyr-37 is an L-tyrosine binding site. The short motif at 42–51 is the 'HIGH' region element; the sequence is PTADSLHLGH. 2 residues coordinate L-tyrosine: Tyr-175 and Gln-179. Residues 235–239 carry the 'KMSKS' region motif; sequence KFGKT. Lys-238 lines the ATP pocket. One can recognise an S4 RNA-binding domain in the interval 357–414; the sequence is ADLQQALVNAGLVPSRGQARTMISSNAVAINGEKQSEPEYLFTDSNRLFDRYTLLRRG.

It belongs to the class-I aminoacyl-tRNA synthetase family. TyrS type 1 subfamily. Homodimer.

It localises to the cytoplasm. It catalyses the reaction tRNA(Tyr) + L-tyrosine + ATP = L-tyrosyl-tRNA(Tyr) + AMP + diphosphate + H(+). In terms of biological role, catalyzes the attachment of tyrosine to tRNA(Tyr) in a two-step reaction: tyrosine is first activated by ATP to form Tyr-AMP and then transferred to the acceptor end of tRNA(Tyr). This Photorhabdus laumondii subsp. laumondii (strain DSM 15139 / CIP 105565 / TT01) (Photorhabdus luminescens subsp. laumondii) protein is Tyrosine--tRNA ligase 1.